We begin with the raw amino-acid sequence, 413 residues long: MKIVDVLCTPGLTGFYFDDQRAIKKGAGHDGFTYTGSTVTEGFTQVRQKGESISVLLVLEDGQVAHGDCAAVQYSGAGGRDPLFLAKDFIPVIEKEIAPKLIGREITNFKPMAEEFDKMTVNGNRLHTAIRYGITQAILDAVAKTRKVTMAEVIRDEYNPGAEINAVPVFAQSGDDRYDNVDKMIIKEADVLPHALINNVEEKLGLKGEKLLEYVKWLRDRIIKLRVREDYAPIFHIDVYGTIGAAFDVDIKAMADYIQTLAEAAKPFHLRIEGPMDVEDRQKQMEAMRDLRAELDGRGVDAELVADEWCNTVEDVKFFTDNKAGHMVQIKTPDLGGVNNIADAIMYCKANGMGAYCGGTCNETNRSAEVTTNIGMACGARQVLAKPGMGVDEGMMIVKNEMNRVLALVGRRK.

Gln-172 contributes to the (2S,3S)-3-methyl-L-aspartate binding site. Residues Asp-238, Glu-273, and Asp-307 each coordinate Mg(2+). Residue Gln-329 coordinates (2S,3S)-3-methyl-L-aspartate. The active-site Proton acceptor is the Lys-331. (2S,3S)-3-methyl-L-aspartate-binding positions include 360–361 (TC) and Cys-361.

This sequence belongs to the methylaspartate ammonia-lyase family. In terms of assembly, homodimer. The cofactor is Mg(2+).

The enzyme catalyses (2S,3S)-3-methyl-L-aspartate = mesaconate + NH4(+). It participates in amino-acid degradation; L-glutamate degradation via mesaconate pathway; acetate and pyruvate from L-glutamate: step 2/4. Inhibited by calcium ions. Involved in the methylaspartate cycle. Catalyzes the formation of the alpha,beta-unsaturated bond by the reversible anti elimination of ammonia from L-threo-beta-methylaspartate (L-threo-(2S,3S)-3-methylaspartate) to give mesaconate. It can also use L-erythro-beta-methylaspartate (L-erythro-(2S,3R)-3-methylaspartate), L-aspartate, fumarate and ethylfumarate as substrates. This Clostridium tetanomorphum protein is Methylaspartate ammonia-lyase.